Here is a 95-residue protein sequence, read N- to C-terminus: Small ribosomal subunit protein uS19 (95 aa).

Residues 73-95 (EFSPTRSYRGHGADKNAKGSKKK) form a disordered region.

Belongs to the universal ribosomal protein uS19 family.

Functionally, protein S19 forms a complex with S13 that binds strongly to the 16S ribosomal RNA. This chain is Small ribosomal subunit protein uS19, found in Deinococcus deserti (strain DSM 17065 / CIP 109153 / LMG 22923 / VCD115).